Here is a 188-residue protein sequence, read N- to C-terminus: Myc target protein 1 (188 aa).

Residues 24–44 (FTVSVAIGLAIGGFLWALFVF) form a helical membrane-spanning segment. A Bipartite nuclear localization signal motif is present at residues 47-65 (RRRRASAPISQWSPTRRPR). 4 positions are modified to phosphoserine: serine 87, serine 90, serine 93, and serine 101.

It belongs to the MYCT1 family. Highly expressed in lung, heart, and skeletal muscle. Expressed in brain, eye, liver, kidney, smooth muscle, pancreas, thyroid, thymus, submaxillary gland, spleen, testis, ovary, prostate, epididymis, and uterus. Deregulated expression promotes apoptosis in response to growth factor deprivation. Overexpression in synergy with CCNB1 may promote genomic instability.

The protein localises to the nucleus membrane. In terms of biological role, may regulate certain MYC target genes, MYC seems to be a direct upstream transcriptional activator. Does not seem to significantly affect growth cell capacity. Overexpression seems to mediate many of the known phenotypic features associated with MYC, including promotion of apoptosis, alteration of morphology, enhancement of anchorage-independent growth, tumorigenic conversion, promotion of genomic instability and inhibition of hematopoietic differentiation. In Mus musculus (Mouse), this protein is Myc target protein 1 (Myct1).